Consider the following 346-residue polypeptide: tRNA N6-adenosine threonylcarbamoyltransferase (346 aa).

A divalent metal cation-binding residues include histidine 117, histidine 121, and tyrosine 138. Residues 138-142, aspartate 170, glycine 185, and asparagine 277 contribute to the substrate site; that span reads YVSGG. A divalent metal cation is bound at residue aspartate 305.

Belongs to the KAE1 / TsaD family. Component of the EKC/KEOPS complex composed of at least SPAP27G11.07c/BUD32, cgi121, gon7, pgp2 and SPAC4H3.13/PCC1; the whole complex dimerizes. Requires a divalent metal cation as cofactor.

The protein localises to the cytoplasm. It localises to the nucleus. The enzyme catalyses L-threonylcarbamoyladenylate + adenosine(37) in tRNA = N(6)-L-threonylcarbamoyladenosine(37) in tRNA + AMP + H(+). Component of the EKC/KEOPS complex that is required for the formation of a threonylcarbamoyl group on adenosine at position 37 (t(6)A37) in tRNAs that read codons beginning with adenine. The complex is probably involved in the transfer of the threonylcarbamoyl moiety of threonylcarbamoyl-AMP (TC-AMP) to the N6 group of A37. Pgp2 likely plays a direct catalytic role in this reaction, but requires other protein(s) of the complex to fulfill this activity. The EKC/KEOPS complex also promotes both telomere uncapping and telomere elongation. The complex is required for efficient recruitment of transcriptional coactivators. The chain is tRNA N6-adenosine threonylcarbamoyltransferase (pgp2) from Schizosaccharomyces pombe (strain 972 / ATCC 24843) (Fission yeast).